The chain runs to 131 residues: Cell cycle protein GpsB (131 aa).

Residues 39–76 are a coiled coil; the sequence is LDGIIRDYEAFTNEIDRLKEENTKLFSRVDELTKQLSV. The tract at residues 111–131 is disordered; it reads KLSDSSVDNHDDGNHSDVDQY. The span at 117–131 shows a compositional bias: basic and acidic residues; sequence VDNHDDGNHSDVDQY.

It belongs to the GpsB family. Forms polymers through the coiled coil domains. Interacts with PBP1, MreC and EzrA.

It localises to the cytoplasm. Functionally, divisome component that associates with the complex late in its assembly, after the Z-ring is formed, and is dependent on DivIC and PBP2B for its recruitment to the divisome. Together with EzrA, is a key component of the system that regulates PBP1 localization during cell cycle progression. Its main role could be the removal of PBP1 from the cell pole after pole maturation is completed. Also contributes to the recruitment of PBP1 to the division complex. Not essential for septum formation. The chain is Cell cycle protein GpsB from Lacticaseibacillus casei (strain BL23) (Lactobacillus casei).